We begin with the raw amino-acid sequence, 107 residues long: Ferredoxin CarAc (107 aa).

The region spanning 6 to 102 (LKVCAASDMQ…VEVKEGEVYV (97 aa)) is the Rieske domain. [2Fe-2S] cluster contacts are provided by Cys-46, His-48, Cys-65, and His-68.

In terms of assembly, monomer. Carbazole 1,9a-dioxygenase complex consists of a terminal oxygenase component CarAa, a ferredoxin reductase component CarAd and a ferredoxin component CarAc. It depends on [2Fe-2S] cluster as a cofactor.

Functionally, part of the multicomponent carbazole 1,9a-dioxygenase (CARDO), that converts carbazole (CAR) into 2-aminobiphenyl-2,3-diol. Acts as a mediator in the electron transfer from CarAd to CarAa. The protein is Ferredoxin CarAc (carAc) of Metapseudomonas resinovorans (Pseudomonas resinovorans).